We begin with the raw amino-acid sequence, 86 residues long: Weak neurotoxin 10 (86 aa).

A signal peptide spans 1–21 (MKTLLLTLVVVTIVCLDLGYT). Cystine bridges form between cysteine 24-cysteine 45, cysteine 27-cysteine 32, cysteine 38-cysteine 63, cysteine 67-cysteine 78, and cysteine 79-cysteine 84.

It belongs to the three-finger toxin family. Ancestral subfamily. Orphan group II sub-subfamily. As to expression, expressed by the venom gland.

Its subcellular location is the secreted. Functionally, binds with low affinity to muscular (alpha-1-beta-1-delta-epsilon/CHRNA1-CHRNB1-CHRND-CHRNE) and very low affinity to neuronal (alpha-7/CHRNA7) nicotinic acetylcholine receptor (nAChR). This is Weak neurotoxin 10 (WNTX10) from Naja sputatrix (Malayan spitting cobra).